The primary structure comprises 703 residues: DNA ligase (703 aa).

NAD(+) is bound by residues 44–48 (DAEYD), 93–94 (SL), and E127. The N6-AMP-lysine intermediate role is filled by K129. R150, E186, K302, and K326 together coordinate NAD(+). Zn(2+) contacts are provided by C420, C422, C444, and C450. Positions 625 to 703 (VADSPVAGKT…EDMWFQRIGA (79 aa)) constitute a BRCT domain.

This sequence belongs to the NAD-dependent DNA ligase family. LigA subfamily. Requires Mg(2+) as cofactor. Mn(2+) is required as a cofactor.

It carries out the reaction NAD(+) + (deoxyribonucleotide)n-3'-hydroxyl + 5'-phospho-(deoxyribonucleotide)m = (deoxyribonucleotide)n+m + AMP + beta-nicotinamide D-nucleotide.. In terms of biological role, DNA ligase that catalyzes the formation of phosphodiester linkages between 5'-phosphoryl and 3'-hydroxyl groups in double-stranded DNA using NAD as a coenzyme and as the energy source for the reaction. It is essential for DNA replication and repair of damaged DNA. The sequence is that of DNA ligase from Chelativorans sp. (strain BNC1).